Here is a 360-residue protein sequence, read N- to C-terminus: Probable cinnamyl alcohol dehydrogenase 9 (360 aa).

A Zn(2+)-binding site is contributed by C50. T52 serves as a coordination point for NADP(+). Positions 72, 73, 103, 106, 109, 117, and 166 each coordinate Zn(2+). NADP(+)-binding positions include T170, G191–G196, S214–K219, T254, G278, and S301–V303.

The protein belongs to the zinc-containing alcohol dehydrogenase family. As to quaternary structure, homodimer. The cofactor is Zn(2+). Expressed in the vasculature of the primary root and elongation regions. Expressed in the hypocotyl, cotyledon veins, vasculature of the first rosette leaves, and hydathodes. In stems, expressed in the vascular cambium, interfascicular cambium, developing xylem, and phloem. Expressed in the entire floral organs at late developing stage, and in the abscission, style and stigmatic regions of siliques and seed funicules.

It catalyses the reaction (E)-cinnamyl alcohol + NADP(+) = (E)-cinnamaldehyde + NADPH + H(+). It functions in the pathway aromatic compound metabolism; phenylpropanoid biosynthesis. Involved in lignin biosynthesis. May catalyze the final step specific for the production of lignin monomers, like coniferyl alcohol, sinapyl alcohol and 4-coumaryl alcohol. This is Probable cinnamyl alcohol dehydrogenase 9 (CAD9) from Arabidopsis thaliana (Mouse-ear cress).